Here is a 750-residue protein sequence, read N- to C-terminus: Photosystem I P700 chlorophyll a apoprotein A1 (750 aa).

Transmembrane regions (helical) follow at residues 70-93 (VFSA…FHGA), 156-179 (LYCT…FHYH), 195-219 (LNHH…HVSL), 291-309 (IAHH…GHMY), 346-369 (WHAQ…HHMY), 385-411 (LSLF…IFMV), 433-455 (AIIS…LYIH), and 531-549 (FLVH…LILL). [4Fe-4S] cluster-binding residues include cysteine 573 and cysteine 582. 2 helical membrane passes run 589–610 (HVFL…HFSW) and 664–686 (LSAY…MFLF). Histidine 675 contacts chlorophyll a'. 2 residues coordinate chlorophyll a: methionine 683 and tyrosine 691. Tryptophan 692 lines the phylloquinone pocket. Residues 724–744 (AVGVTHYLLGGIATTWAFFLA) form a helical membrane-spanning segment.

The protein belongs to the PsaA/PsaB family. As to quaternary structure, the PsaA/B heterodimer binds the P700 chlorophyll special pair and subsequent electron acceptors. PSI consists of a core antenna complex that captures photons, and an electron transfer chain that converts photonic excitation into a charge separation. The eukaryotic PSI reaction center is composed of at least 11 subunits. P700 is a chlorophyll a/chlorophyll a' dimer, A0 is one or more chlorophyll a, A1 is one or both phylloquinones and FX is a shared 4Fe-4S iron-sulfur center. is required as a cofactor.

It localises to the plastid. Its subcellular location is the chloroplast thylakoid membrane. The enzyme catalyses reduced [plastocyanin] + hnu + oxidized [2Fe-2S]-[ferredoxin] = oxidized [plastocyanin] + reduced [2Fe-2S]-[ferredoxin]. PsaA and PsaB bind P700, the primary electron donor of photosystem I (PSI), as well as the electron acceptors A0, A1 and FX. PSI is a plastocyanin-ferredoxin oxidoreductase, converting photonic excitation into a charge separation, which transfers an electron from the donor P700 chlorophyll pair to the spectroscopically characterized acceptors A0, A1, FX, FA and FB in turn. Oxidized P700 is reduced on the lumenal side of the thylakoid membrane by plastocyanin. The polypeptide is Photosystem I P700 chlorophyll a apoprotein A1 (Drimys granadensis).